The sequence spans 206 residues: Triafestin-2 (206 aa).

A signal peptide spans 1–18 (MKTILAVIFFGILAFAFA). N-linked (GlcNAc...) asparagine glycosylation is found at asparagine 25, asparagine 55, and asparagine 178.

This sequence belongs to the calycin superfamily. Triabin family. In terms of assembly, interacts with host coagulation factor XII (F12) (inactive and activated) (via amino acids 1-77). Interacts with host high molecular weight kininogen (KNG1) (via amino acids 402-532). Salivary gland (at protein level).

It localises to the secreted. Zn(2+) modulates binding to host coagulation factor XII (F12) and high molecular weight kininogen (KNG1). Functionally, suppresses activation of the host plasma kallikrein-kinin system, leading to inhibition of the intrinsic coagulation pathway. Blocks host coagulation factor XII (F12) and prekallikrein (KLKB1) reciprocal activation without affecting their amidolytic activities. Blocks binding of host F12 and high molecular weight kininogen (KNG1) to negatively charged surfaces. Attenuates generation of bradykinin by interfering with activation of host kallikrein-kinin system. This chain is Triafestin-2, found in Triatoma infestans (Assassin bug).